A 121-amino-acid polypeptide reads, in one-letter code: MSISQDDILNAVAEMSVLQVVELIKAFEEKFGVTAAAGSAGPAVAAAVVEEQTEFNVMLLEAGEKKVNVIKAVRELTGLGLKEAKAVVDGAPAMVLEAVAKDAADKAKATLEEAGAKVELK.

Belongs to the bacterial ribosomal protein bL12 family. Homodimer. Part of the ribosomal stalk of the 50S ribosomal subunit. Forms a multimeric L10(L12)X complex, where L10 forms an elongated spine to which 2 to 4 L12 dimers bind in a sequential fashion. Binds GTP-bound translation factors.

In terms of biological role, forms part of the ribosomal stalk which helps the ribosome interact with GTP-bound translation factors. Is thus essential for accurate translation. The protein is Large ribosomal subunit protein bL12 of Pseudomonas savastanoi pv. phaseolicola (strain 1448A / Race 6) (Pseudomonas syringae pv. phaseolicola (strain 1448A / Race 6)).